The primary structure comprises 479 residues: MKKPEKITSRTANFAKWYVDVITQADLMNYGPIKGTIYFKPLGYKIWENIVKIVNAYFVKQKIENVYFPLLIPQDFIEKEKKHIEGFAPELLTITKVGGKNLVENIYIRPTSELLFADYFKAEIAKNNILPIKLNQWSQVLRWEKTTNPFLRNTEFLWQEGHTIHASKVEADQFAKKIARFYKYFLENYLAIPVISGQKTEREKFAGAVNTYTVEAMMQNFRALQSATAHFLGQNFAKNFEIFYKNKENKSQIPFQTSWGLSTRLIGAIVMVHSDDNGLIFPPKIAPIQVDILEFFSKKNQEVKIFAKKIAKILKNAKISYKIDDTDQQIGYKINNSEVHGAPIRIEIGPNEVKNNQICLVRRDNHQKFFFNIDLLKEKCRKILEQIQADLFKKAKIRLLENTVFVNSINEFEQAIKNNKFVIAPFSESPEREQEIQEKTGATARCILPKNSFFALPQTGNSIFSGEKTNKFVLFAKSY.

The protein belongs to the class-II aminoacyl-tRNA synthetase family. ProS type 3 subfamily. In terms of assembly, homodimer.

It localises to the cytoplasm. The catalysed reaction is tRNA(Pro) + L-proline + ATP = L-prolyl-tRNA(Pro) + AMP + diphosphate. In terms of biological role, catalyzes the attachment of proline to tRNA(Pro) in a two-step reaction: proline is first activated by ATP to form Pro-AMP and then transferred to the acceptor end of tRNA(Pro). The protein is Proline--tRNA ligase of Mesomycoplasma hyopneumoniae (strain J / ATCC 25934 / NCTC 10110) (Mycoplasma hyopneumoniae).